Consider the following 448-residue polypeptide: Leukocyte immunoglobulin-like receptor subfamily B member 4 (448 aa).

Positions 1–21 are cleaved as a signal peptide; it reads MIPTFTALLCLGLSLGPRTHM. Residues 22–259 are Extracellular-facing; sequence QAGPLPKPTL…PHSGLRRHWE (238 aa). Ig-like C2-type domains follow at residues 27-118 and 124-218; these read PKPT…LVMT and PTLS…LIVS. Disulfide bonds link Cys-49–Cys-98 and Cys-144–Cys-195. The segment at 217–248 is disordered; the sequence is VSGSLEDPRPSPTRSVSTAAGPEDQPLMPTGS. Residues 260–280 traverse the membrane as a helical segment; it reads VLIGVLVVSILLLSLLLFLLL. Residues 281–448 are Cytoplasmic-facing; that stretch reads QHWRQGKHRT…PSVYATLAIH (168 aa). Residues 297-448 are disordered; sequence DFQRPPGAAE…PSVYATLAIH (152 aa). Ser-319 carries the post-translational modification Phosphoserine. Positions 344-354 are enriched in basic and acidic residues; sequence MDTRQSPHDED. Residues 358–363 carry the ITIM motif 1 motif; the sequence is VTYAKV. Positions 384 to 398 are enriched in basic and acidic residues; the sequence is LDTKDRQAEEDRQMD. Short sequence motifs (ITIM motif) lie at residues 410-415 and 440-445; these read VTYAQL and SVYATL.

Interacts with PTPN6. As to expression, detected on monocytes, macrophages, dendritic cells, natural killer cells and B-cells (at protein level). Expressed in the lung.

The protein localises to the cell membrane. Inhibitory receptor involved in the down-regulation of the immune response and the development of immune tolerance. Receptor for FN1. Receptor for apolipoprotein APOE. Receptor for ALCAM/CD166. Inhibits receptor-mediated phosphorylation of cellular proteins and mobilization of intracellular calcium ions. Inhibits FCGR1A/CD64-mediated monocyte activation by inducing phosphatase-mediated down-regulation of the phosphorylation of multiple proteins including LCK, SYK, LAT and ERK, leading to a reduction in TNF production. This inhibition of monocyte activation occurs at least in part via binding to FN1. Inhibits T cell proliferation, inducing anergy, suppressing the differentiation of IFNG-producing CD8+ cytotoxic T cells and enhancing the generation of CD8+ T suppressor cells. Induces up-regulation of CD86 on dendritic cells. Interferes with TNFRSF5-signaling and NF-kappa-B up-regulation. This Homo sapiens (Human) protein is Leukocyte immunoglobulin-like receptor subfamily B member 4 (LILRB4).